The chain runs to 251 residues: Flap endonuclease Xni (251 aa).

Residue aspartate 104 coordinates Mg(2+). Positions 160 to 249 constitute a 5'-3' exonuclease domain; that stretch reads VLPRQLPDYW…IDGNLQQLRL (90 aa). 5 residues coordinate K(+): leucine 171, alanine 172, proline 180, valine 182, and isoleucine 185. The segment at 184–189 is interaction with DNA; it reads GIGPKS.

It belongs to the Xni family. It depends on Mg(2+) as a cofactor. K(+) serves as cofactor.

Its function is as follows. Has flap endonuclease activity. During DNA replication, flap endonucleases cleave the 5'-overhanging flap structure that is generated by displacement synthesis when DNA polymerase encounters the 5'-end of a downstream Okazaki fragment. The chain is Flap endonuclease Xni from Salmonella choleraesuis (strain SC-B67).